A 465-amino-acid chain; its full sequence is MAAQDYVVKDIALAAYGRKEIDIAETEMPGLMACREEFSFSQPLRGARISGSLHITIQTAVLIETLKAIGADVRWSSSNIFSTQDHAAAAIAATGTAVFGVKGETLEEYWAYIDAIFQWPDGNPSNLILDDGADATNYILTGSRAEVNKDILSYPKTKEEEFFFKQIQKRMKITPGFFTRQRTAIKGVSEETTTGVLRLYQLQKEGLLPFPAINVNDSVTKSKFDNKYGCKESLVDGIRRGTDVMIAGKTAIVCGYGNVGKGSAASLSGAGARVKITEIDPICALQAAMDGYEVVTLDDAASSADIIITTTGNKDVVRLDHMRQVKDMCILGNIGHFDNEIQVSALRNLPWTNIKPQVDIVTFPDGKRIILLSEGRLLNLGNATGHPSFVMSASFTNQVLAQIELFTRAEHYKNEVTVLPKRLDEKVARLHLDRLGVKLSVLSEEQAVYIGVTPQGPYKPNHYRY.

Residues T56, D131, and E191 each contribute to the substrate site. 192–194 (TTT) contacts NAD(+). The substrate site is built by K221 and D225. Residues N226, 255 to 260 (GYGNVG), E278, N313, 334 to 336 (IGH), and N379 each bind NAD(+).

Belongs to the adenosylhomocysteinase family. The cofactor is NAD(+).

The protein resides in the cytoplasm. It carries out the reaction S-adenosyl-L-homocysteine + H2O = L-homocysteine + adenosine. The protein operates within amino-acid biosynthesis; L-homocysteine biosynthesis; L-homocysteine from S-adenosyl-L-homocysteine: step 1/1. May play a key role in the regulation of the intracellular concentration of adenosylhomocysteine. This Bartonella quintana (strain Toulouse) (Rochalimaea quintana) protein is Adenosylhomocysteinase.